A 732-amino-acid chain; its full sequence is Cullin-3B (732 aa).

The Cullin neddylation domain maps to 662 to 724 (DRKPQIEAAI…RDFLERDNTD (63 aa)). Lys676 participates in a covalent cross-link: Glycyl lysine isopeptide (Lys-Gly) (interchain with G-Cter in NEDD8).

It belongs to the cullin family. Interacts with BTB/POZ-MATH proteins BPM1 and BPM3. In terms of processing, neddylated. Deneddylated via its interaction with the COP9 signalosome (CSN) complex.

Its pathway is protein modification; protein ubiquitination. In terms of biological role, component of the cullin-RING ubiquitin ligases (CRL), or CUL3-RBX1-BTB protein E3 ligase complexes which mediate the ubiquitination and subsequent proteasomal degradation of target proteins. The functional specificity of the CRL complex depends on the BTB domain-containing protein as the substrate recognition component. Involved in embryo pattern formation and endosperm development. Required for the normal division and organization of the root stem cells and columella root cap cells. Regulates primary root growth by an unknown pathway, but in an ethylene-dependent manner. Functions in distal root patterning, by an ethylene-independent mechanism. Functionally redundant with CUL3A. The protein is Cullin-3B (CUL3B) of Arabidopsis thaliana (Mouse-ear cress).